Here is a 164-residue protein sequence, read N- to C-terminus: Phosphopantetheine adenylyltransferase (164 aa).

A substrate-binding site is contributed by serine 9. Residues 9–10 and histidine 17 each bind ATP; that span reads SF. Residues lysine 41, leucine 73, and lysine 87 each coordinate substrate. ATP is bound by residues 88–90, glutamate 98, and 123–129; these read GLR and YSYLSSS.

This sequence belongs to the bacterial CoaD family. In terms of assembly, homohexamer. Mg(2+) is required as a cofactor.

Its subcellular location is the cytoplasm. It catalyses the reaction (R)-4'-phosphopantetheine + ATP + H(+) = 3'-dephospho-CoA + diphosphate. It functions in the pathway cofactor biosynthesis; coenzyme A biosynthesis; CoA from (R)-pantothenate: step 4/5. Its function is as follows. Reversibly transfers an adenylyl group from ATP to 4'-phosphopantetheine, yielding dephospho-CoA (dPCoA) and pyrophosphate. The protein is Phosphopantetheine adenylyltransferase of Clostridium botulinum (strain Okra / Type B1).